Reading from the N-terminus, the 413-residue chain is MDHHQLFSLCSFSYIFKIKKHLFVSLFLLSLLIFSTVVVDVMPSLRIGLLSSSSSQTVTKECDYSKGKWVRRASSSSSSVNGLFYGEECRFLDSGFRCHKHGRKDSGYLDWRWQPHGCDLPRFNASDLLERSRNGRIVFVGDSIGRNQWESLMCMLSQAIPNKSEIYEVNGNPITKHKGFLSMRFPRENLTVEYHRSPFLVVIGRPPDKSPKEIKTTVRVDEFNWQSKRWVGSDVLVFNSGHWWNEDKTVLTGCYFEEGRKVNKTMGVMEAFGKSLKTWKSWVLEKLDPDKSYVFFRSYSPVHYRNGTWNTGGLCDAEIEPETDKRKLEPDASHNEYIYKVIEEMRYRHSKVKFLNITYLTEFRKDGHISRYREQGTSVDVPQDCSHWCLPGVPDTWNEILYAQLLSMNYRTK.

A helical; Signal-anchor for type II membrane protein membrane pass occupies residues 22-42 (LFVSLFLLSLLIFSTVVVDVM). The GDS motif signature appears at 141–143 (GDS). The DCXHWCLPGXXDXWN motif motif lies at 384–398 (DCSHWCLPGVPDTWN).

This sequence belongs to the PC-esterase family. TBL subfamily.

It localises to the membrane. Functionally, may act as a bridging protein that binds pectin and other cell wall polysaccharides. Probably involved in maintaining esterification of pectins. May be involved in the specific O-acetylation of cell wall polymers. This is Protein trichome birefringence-like 9 (TBL9) from Arabidopsis thaliana (Mouse-ear cress).